Consider the following 619-residue polypeptide: Chaperone protein HscA homolog (619 aa).

Belongs to the heat shock protein 70 family.

Chaperone involved in the maturation of iron-sulfur cluster-containing proteins. Has a low intrinsic ATPase activity which is markedly stimulated by HscB. The chain is Chaperone protein HscA homolog from Acinetobacter baumannii (strain ATCC 17978 / DSM 105126 / CIP 53.77 / LMG 1025 / NCDC KC755 / 5377).